The primary structure comprises 266 residues: Proline-rich protein 23A (266 aa).

Residues 1–18 (MGSRPRSPSAFPAPWWGQ) are compositionally biased toward low complexity. Disordered regions lie at residues 1–47 (MGSR…SLED) and 197–266 (EPCA…LFQE). The segment covering 227 to 238 (PSSPLQPLPPSP) has biased composition (pro residues). Over residues 255–266 (PPCKARRRLFQE) the composition is skewed to basic residues.

Belongs to the PRR23 family.

This is Proline-rich protein 23A (PRR23A) from Homo sapiens (Human).